A 222-amino-acid polypeptide reads, in one-letter code: 7-cyano-7-deazaguanine synthase (222 aa).

9-19 is an ATP binding site; sequence ISGGMDSALSA. Cys188, Cys196, Cys199, and Cys202 together coordinate Zn(2+).

Belongs to the QueC family. Zn(2+) is required as a cofactor.

It catalyses the reaction 7-carboxy-7-deazaguanine + NH4(+) + ATP = 7-cyano-7-deazaguanine + ADP + phosphate + H2O + H(+). Its pathway is purine metabolism; 7-cyano-7-deazaguanine biosynthesis. Its function is as follows. Catalyzes the ATP-dependent conversion of 7-carboxy-7-deazaguanine (CDG) to 7-cyano-7-deazaguanine (preQ(0)). This is 7-cyano-7-deazaguanine synthase from Sulfurovum sp. (strain NBC37-1).